Consider the following 379-residue polypeptide: MTNIRKTHPLMKIINNSLIDLPAPSNISSLWNFGSLLGACLTIQIITGLFLAMHYTADTTTAFSSVTHICRDVNYGWTIRYLHANGASLFFLCLFIHVGRGLYYGSFVLLETWNIGIMLLFSVMATAFMGYVLPWGQMSFWGATVITNLLSAIPYVGTDLVEWIWGGFSVSKPTLTRFFALHFILPFIISALTMIHLLFLHETGSNNPLGMSSNPDKIPFHPYYTTKDFLGLLLLILLLMTLTLFYPDLLGDPDNYTPANPLNTPPHIKPEWYFLFAYAILRSIPNKLGGVVALIMSILILAIMPFLQPNKQQTMMFRPLSQFLFWILVADLLTLTWIGGQPVENPFINIGQMASILYFSLMVFIMPMTCLVENKMLKW.

Transmembrane regions (helical) follow at residues 33–53 (FGSLLGACLTIQIITGLFLAM), 77–98 (WTIRYLHANGASLFFLCLFIHV), 113–133 (WNIGIMLLFSVMATAFMGYVL), and 178–198 (FFALHFILPFIISALTMIHLL). Residues histidine 83 and histidine 97 each coordinate heme b. Positions 182 and 196 each coordinate heme b. Position 201 (histidine 201) interacts with a ubiquinone. 4 consecutive transmembrane segments (helical) span residues 226 to 246 (TKDFLGLLLLILLLMTLTLFY), 288 to 308 (LGGVVALIMSILILAIMPFLQ), 320 to 340 (LSQFLFWILVADLLTLTWIGG), and 347 to 367 (FINIGQMASILYFSLMVFIMP).

It belongs to the cytochrome b family. The cytochrome bc1 complex contains 11 subunits: 3 respiratory subunits (MT-CYB, CYC1 and UQCRFS1), 2 core proteins (UQCRC1 and UQCRC2) and 6 low-molecular weight proteins (UQCRH/QCR6, UQCRB/QCR7, UQCRQ/QCR8, UQCR10/QCR9, UQCR11/QCR10 and a cleavage product of UQCRFS1). This cytochrome bc1 complex then forms a dimer. Requires heme b as cofactor.

It is found in the mitochondrion inner membrane. Its function is as follows. Component of the ubiquinol-cytochrome c reductase complex (complex III or cytochrome b-c1 complex) that is part of the mitochondrial respiratory chain. The b-c1 complex mediates electron transfer from ubiquinol to cytochrome c. Contributes to the generation of a proton gradient across the mitochondrial membrane that is then used for ATP synthesis. This is Cytochrome b (MT-CYB) from Lepilemur aeeclis (Sportive lemur).